The following is a 200-amino-acid chain: Recombination protein RecR (200 aa).

Residues 58 to 75 (CPDCFCLKTSKTSSCDFC) form a C4-type zinc finger. In terms of domain architecture, Toprim spans 82 to 177 (SFLCIVATPK…KISRLALGMP (96 aa)).

This sequence belongs to the RecR family.

Its function is as follows. May play a role in DNA repair. It seems to be involved in an RecBC-independent recombinational process of DNA repair. It may act with RecF and RecO. The protein is Recombination protein RecR of Chlamydia muridarum (strain MoPn / Nigg).